Consider the following 350-residue polypeptide: Biotin synthase (350 aa).

Positions 42–269 (NEVQVSTLCS…QSHVRLSAGR (228 aa)) constitute a Radical SAM core domain. [4Fe-4S] cluster contacts are provided by Cys-57, Cys-61, and Cys-64. 4 residues coordinate [2Fe-2S] cluster: Cys-101, Cys-132, Cys-192, and Arg-264.

This sequence belongs to the radical SAM superfamily. Biotin synthase family. In terms of assembly, homodimer. [4Fe-4S] cluster is required as a cofactor. The cofactor is [2Fe-2S] cluster.

The enzyme catalyses (4R,5S)-dethiobiotin + (sulfur carrier)-SH + 2 reduced [2Fe-2S]-[ferredoxin] + 2 S-adenosyl-L-methionine = (sulfur carrier)-H + biotin + 2 5'-deoxyadenosine + 2 L-methionine + 2 oxidized [2Fe-2S]-[ferredoxin]. The protein operates within cofactor biosynthesis; biotin biosynthesis; biotin from 7,8-diaminononanoate: step 2/2. Functionally, catalyzes the conversion of dethiobiotin (DTB) to biotin by the insertion of a sulfur atom into dethiobiotin via a radical-based mechanism. The chain is Biotin synthase from Saccharophagus degradans (strain 2-40 / ATCC 43961 / DSM 17024).